The primary structure comprises 105 residues: Protein S100-A11 (105 aa).

Met1 carries the N-acetylmethionine modification. An N-acetylalanine; in Protein S100-A11, N-terminally processed modification is found at Ala2. Position 3 is an N6-acetyllysine (Lys3). A phosphoserine mark is found at Ser5 and Ser6. Residue Thr10 is modified to Phosphothreonine. EF-hand domains lie at Cys13–Ala49 and Lys55–Ala90. The residue at position 27 (Lys27) is an N6-acetyllysine. Thr33, Glu38, Asp68, Asn70, Asp72, Gln74, and Glu79 together coordinate Ca(2+).

It belongs to the S-100 family. Homodimer; disulfide-linked. Phosphorylation at Thr-10 by PRKCA significantly suppresses homodimerization and promotes association with NCL/nucleolin which induces nuclear translocation.

Its subcellular location is the cytoplasm. It localises to the nucleus. Facilitates the differentiation and the cornification of keratinocytes. The polypeptide is Protein S100-A11 (S100A11) (Homo sapiens (Human)).